Here is a 251-residue protein sequence, read N- to C-terminus: uncharacterized protein (251 aa).

This is an uncharacterized protein from Methanothermus fervidus.